We begin with the raw amino-acid sequence, 256 residues long: Hydroxyacylglutathione hydrolase (256 aa).

Residues H55, H57, D59, H60, H113, D130, and H168 each coordinate Zn(2+).

Belongs to the metallo-beta-lactamase superfamily. Glyoxalase II family. Monomer. Zn(2+) serves as cofactor.

The enzyme catalyses an S-(2-hydroxyacyl)glutathione + H2O = a 2-hydroxy carboxylate + glutathione + H(+). It participates in secondary metabolite metabolism; methylglyoxal degradation; (R)-lactate from methylglyoxal: step 2/2. Thiolesterase that catalyzes the hydrolysis of S-D-lactoyl-glutathione to form glutathione and D-lactic acid. The chain is Hydroxyacylglutathione hydrolase from Alkalilimnicola ehrlichii (strain ATCC BAA-1101 / DSM 17681 / MLHE-1).